A 499-amino-acid polypeptide reads, in one-letter code: UDP-N-acetylmuramoylalanine--D-glutamate ligase (499 aa).

An ATP-binding site is contributed by 128-134 (GTNGKTT).

The protein belongs to the MurCDEF family.

The protein localises to the cytoplasm. It carries out the reaction UDP-N-acetyl-alpha-D-muramoyl-L-alanine + D-glutamate + ATP = UDP-N-acetyl-alpha-D-muramoyl-L-alanyl-D-glutamate + ADP + phosphate + H(+). It participates in cell wall biogenesis; peptidoglycan biosynthesis. Its function is as follows. Cell wall formation. Catalyzes the addition of glutamate to the nucleotide precursor UDP-N-acetylmuramoyl-L-alanine (UMA). The protein is UDP-N-acetylmuramoylalanine--D-glutamate ligase of Rhodococcus jostii (strain RHA1).